Consider the following 189-residue polypeptide: Myb-like protein T (189 aa).

A Myb-like domain is found at 121 to 172 (NWSPDEQKALMVEVSTLGNKSEINWFFISQQLFLKGISRNARECQRKHESIQ).

This is Myb-like protein T (mybT) from Dictyostelium discoideum (Social amoeba).